The primary structure comprises 350 residues: Galactokinase (350 aa).

14 to 17 (EHTD) serves as a coordination point for substrate. ATP-binding positions include Ser46 and 96–102 (GAGLSSS). Mg(2+)-binding residues include Ser102 and Glu134. Catalysis depends on Asp146, which acts as the Proton acceptor. Tyr196 is a substrate binding site.

The protein belongs to the GHMP kinase family. GalK subfamily.

Its subcellular location is the cytoplasm. The enzyme catalyses alpha-D-galactose + ATP = alpha-D-galactose 1-phosphate + ADP + H(+). It participates in carbohydrate metabolism; galactose metabolism. Its function is as follows. Catalyzes the transfer of the gamma-phosphate of ATP to D-galactose to form alpha-D-galactose-1-phosphate (Gal-1-P). This chain is Galactokinase, found in Thermotoga neapolitana (strain ATCC 49049 / DSM 4359 / NBRC 107923 / NS-E).